An 87-amino-acid polypeptide reads, in one-letter code: U18-myrmicitoxin-Mri1a (87 aa).

A signal peptide spans 1–32; that stretch reads MKNNYNRINTFIVYLMVTFSLISIISITECTP. In terms of domain architecture, EGF-like spans 33–77; sequence NHDPCPPQYAEALCLNGGTCFSVTIMGSDNYNCICAPGFRGWRCQ. Intrachain disulfides connect cysteine 37–cysteine 52, cysteine 46–cysteine 65, and cysteine 67–cysteine 76.

Post-translationally, O-glycosylated. In terms of tissue distribution, expressed by the venom gland.

Its subcellular location is the secreted. This is U18-myrmicitoxin-Mri1a from Manica rubida (European giant red ant).